The chain runs to 346 residues: Outer membrane protein A (346 aa).

A signal peptide spans 1–21 (MKKTAIAIAVALAGFATVAQA). Transmembrane regions (beta stranded) follow at residues 27–37 (TWYTGAKLGWS), 55–66 (QLGAGAFGGYQV), 70–78 (VGFEMGYDW), 96–107 (QGVQLTAKLGYP), 112–120 (LDIYTRLGG), 142–151 (PVFAGGVEYA), 156–163 (IATRLEYQ), and 182–190 (MLSLGVSYR). The interval 197-208 (APVVAPAPAPAP) is hinge-like. Repeat copies occupy residues 201–202 (AP), 203–204 (AP), 205–206 (AP), and 207–208 (AP). The tract at residues 201-208 (APAPAPAP) is 4 X 2 AA tandem repeats of A-P. The 129-residue stretch at 210-338 (VQTKHFTLKS…RVEIEVKGIK (129 aa)) folds into the OmpA-like domain. The cysteines at positions 311 and 323 are disulfide-linked.

This sequence belongs to the outer membrane OOP (TC 1.B.6) superfamily. OmpA family. In terms of assembly, monomer and homodimer.

Its subcellular location is the cell outer membrane. Functionally, with TolR probably plays a role in maintaining the position of the peptidoglycan cell wall in the periplasm. Acts as a porin with low permeability that allows slow penetration of small solutes; an internal gate slows down solute passage. Its function is as follows. Required for conjugation with F-type plasmids; probably serves as the mating receptor on recipient cells. The chain is Outer membrane protein A from Escherichia coli O157:H7.